The following is a 1762-amino-acid chain: Kinase D-interacting substrate of 220 kDa (1762 aa).

The Cytoplasmic segment spans residues 1 to 508; that stretch reads MSVLISQSVI…WLIVFLTLLL (508 aa). ANK repeat units follow at residues 45-74, 78-107, 111-140, 145-174, 178-207, 211-240, 244-273, 277-306, 310-339, 343-372, and 376-405; these read AAEQGNVEIVKELLKNGANCNLEDLDNWTA, ASKEGHIHIVEELLKSGASLEHRDMGGWTA, ACYKGRTDVVELLLSHGANPSVTGLYSVYP, AGRGHADIVHLLLQNGAKVNCSDKYGTTPL, ARKGHLECVKHLLAMGADVDQEGANSMTAL, VKGGYTQSVKEILKRNPNVNLTDKDGNTAL, SKEGHIEIVQDLLDAGTYVNIPDRSGDTVL, VRGGHVEIVRALLQKYADIDIRGQDNKTAL, VEKGNATMVRDILQCNPDTEICTKDGETPL, TKMRNIEVVELLLDKGAKVSAVDKKGDTPL, and IRGRSRRLAELLLRNPKDGRLLYRPNKAGE. In terms of domain architecture, KAP NTPase spans 440–953; sequence YDLYSSALAD…NIVSVTGRLL (514 aa). A helical membrane pass occupies residues 509-529; it reads CGGLGLVFAFTVDTNLAIAIS. Residues 530-533 lie on the Extracellular side of the membrane; that stretch reads LSFL. Residues 534 to 554 form a helical membrane-spanning segment; the sequence is ALIYIFFIVIYFGGRREGESW. Residues 555-668 lie on the Cytoplasmic side of the membrane; that stretch reads NWAWALSTRL…SFVIFLFIVG (114 aa). The chain crosses the membrane as a helical span at residues 669–689; the sequence is CIIAGITLLAIFRVDPKHLTV. Topologically, residues 690 to 696 are extracellular; it reads NAILISI. Residues 697–717 form a helical membrane-spanning segment; the sequence is ASVVGLAFVLNCRTWWQVLDS. At 718-1680 the chain is on the cytoplasmic side; sequence LLNSQRKRLH…TPSTVTLNNN (963 aa). 2 positions are modified to phosphoserine: Ser882 and Ser885. Thr914 bears the Phosphothreonine mark. Position 918 is a phosphoserine; by PKD (Ser918). The tract at residues 1089 to 1092 is mediates interaction with CRKL; sequence PRPP. A phosphoserine mark is found at Ser1163, Ser1288, Ser1344, Ser1351, Ser1353, Ser1354, and Ser1357. Disordered regions lie at residues 1279-1305, 1336-1358, 1390-1440, and 1452-1556; these read DPRFLNENSSAPVPHGESARRSSHTEL, RHSNLSWQSQTRRTPSLSSLNSQ, EGGT…DGRK, and YSSS…EPIR. Polar residues predominate over residues 1338–1350; that stretch reads SNLSWQSQTRRTP. Over residues 1395–1422 the composition is skewed to low complexity; the sequence is SSTISGRSSPHSTYYIGQSSSGGSIHST. The segment covering 1423 to 1440 has biased composition (basic and acidic residues); that stretch reads LEQERGKEGELKQEDGRK. Positions 1452 to 1462 are enriched in polar residues; it reads YSSSGVSTNEA. 4 positions are modified to phosphoserine: Ser1513, Ser1518, Ser1547, and Ser1566. A compositionally biased stretch (acidic residues) spans 1514–1524; that stretch reads DEDESGTEESD. The span at 1529-1553 shows a compositional bias: basic and acidic residues; it reads LKDDKDKKAEGKAERVCKSPEHSAE. The interval 1571–1628 is disordered; the sequence is DKKDSSDSGVRSNESSPNHSLHNEAADDSQLEKANLIELEDEGHSGKRGMPHSLSGLQ. Residues 1579–1590 show a composition bias toward polar residues; that stretch reads GVRSNESSPNHS. Phosphoserine is present on residues Ser1615 and Ser1625. At Thr1671 the chain carries Phosphothreonine. Ser1673 carries the post-translational modification Phosphoserine. Thr1676 is modified (phosphothreonine). Residues 1704-1762 form a disordered region; the sequence is ILRPGPSPNPTAVQNENLKSMAHKRSQRSSYTRLSKDASELHAASSESTGFGEERESIL. Residues 1757 to 1762 carry the PDZ-binding motif; that stretch reads ERESIL.

In terms of assembly, found in a complex, at least composed of KIDINS220, MAGI2, NTRK1 and RAPGEF2; the complex is mainly formed at late endosomes in a nerve growth factor (NGF)-dependent manner. Interacts with RAPGEF2; the interaction is strengthened after NGF stimulation. Isoform 2 interacts (via C-terminal domain) with MAGI2 isoform 1 (via PDZ domain). Interacts with NTRK1, NTRK2, NTRK3, ERKL and NGFR. Can form a ternary complex with NGFR and NTRK1 and this complex is affected by the expression levels of KIDINS220/ARMS. An increase in KIDINS220/ARMS expression leads to a decreased association of NGFR and NTRK1. Interacts (via PDZ-binding motif) with SNTA1 and SNTB2 (via PDZ domains). Interacts with EPHA4 and PRKD1. Post-translationally, tyrosine phosphorylated by NTRK1, NTRK2, EPHB2 and EPHA4. Phosphorylation at Ser-918 is induced by phorbol ester treatment. Phosphorylation by NTRK2 is induced by brain-derived neurotrophic factor (BDNF) and neurotrophin-4/5. Phosphorylation by NTRK1 is induced by nerve growth factor (NGF). In terms of tissue distribution, expressed in developing nervous system and in highly plastic areas of the adult brain. Also expressed in neuroendocrine cells, where it concentrates at the tip of neurites. Expressed in developing muscle and is concentrated at the neuromuscular junction (NMS). SNTA1 can regulate its localization in the NMS.

It localises to the membrane. It is found in the late endosome. Functionally, promotes a prolonged MAP-kinase signaling by neurotrophins through activation of a Rap1-dependent mechanism. Provides a docking site for the CRKL-C3G complex, resulting in Rap1-dependent sustained ERK activation. May play an important role in regulating postsynaptic signal transduction through the syntrophin-mediated localization of receptor tyrosine kinases such as EPHA4. In cooperation with SNTA1 can enhance EPHA4-induced JAK/STAT activation. Plays a role in nerve growth factor (NGF)-induced recruitment of RAPGEF2 to late endosomes and neurite outgrowth. May play a role in neurotrophin- and ephrin-mediated neuronal outgrowth and in axon guidance during neural development and in neuronal regeneration. This chain is Kinase D-interacting substrate of 220 kDa (Kidins220), found in Rattus norvegicus (Rat).